The primary structure comprises 106 residues: Large ribosomal subunit protein uL24 (106 aa).

Belongs to the universal ribosomal protein uL24 family. Part of the 50S ribosomal subunit.

Its function is as follows. One of two assembly initiator proteins, it binds directly to the 5'-end of the 23S rRNA, where it nucleates assembly of the 50S subunit. Functionally, one of the proteins that surrounds the polypeptide exit tunnel on the outside of the subunit. This chain is Large ribosomal subunit protein uL24, found in Azobacteroides pseudotrichonymphae genomovar. CFP2.